A 1169-amino-acid chain; its full sequence is ATP-dependent helicase/deoxyribonuclease subunit B (1169 aa).

In terms of domain architecture, UvrD-like helicase ATP-binding spans 1–296; sequence MTLRIVSGRS…QHVEANFANM (296 aa). 8–15 is a binding site for ATP; it reads GRSGTGKS. The UvrD-like helicase C-terminal domain occupies 276–582; the sequence is YYTQRFQSED…EFSRIPPTLD (307 aa). 4 residues coordinate [4Fe-4S] cluster: Cys-804, Cys-1129, Cys-1132, and Cys-1138.

Belongs to the helicase family. AddB/RexB type 1 subfamily. As to quaternary structure, heterodimer of AddA and AddB. The cofactor is Mg(2+). It depends on [4Fe-4S] cluster as a cofactor.

Its function is as follows. The heterodimer acts as both an ATP-dependent DNA helicase and an ATP-dependent, dual-direction single-stranded exonuclease. Recognizes the chi site generating a DNA molecule suitable for the initiation of homologous recombination. The AddB subunit has 5' -&gt; 3' nuclease activity but not helicase activity. The chain is ATP-dependent helicase/deoxyribonuclease subunit B from Lysinibacillus sphaericus (strain C3-41).